The following is a 198-amino-acid chain: Small ribosomal subunit protein uS4 (198 aa).

The region spanning 91-151 is the S4 RNA-binding domain; sequence SRLDNIVYRL…EKSKNLKIVE (61 aa).

It belongs to the universal ribosomal protein uS4 family. As to quaternary structure, part of the 30S ribosomal subunit. Contacts protein S5. The interaction surface between S4 and S5 is involved in control of translational fidelity.

Its function is as follows. One of the primary rRNA binding proteins, it binds directly to 16S rRNA where it nucleates assembly of the body of the 30S subunit. With S5 and S12 plays an important role in translational accuracy. The polypeptide is Small ribosomal subunit protein uS4 (Phytoplasma australiense).